Reading from the N-terminus, the 121-residue chain is MAQRTPRELRLRRHRRVRKKVSGTPQRPRLCVFRSNMHIYAQVIDDTVGRTLAAASTVEPELRASLAGKTKTERAKVVGAAIAERARAVGIECVVFDRGGFKYHGRIQALADAAREGGLKF.

Belongs to the universal ribosomal protein uL18 family. In terms of assembly, part of the 50S ribosomal subunit; part of the 5S rRNA/L5/L18/L25 subcomplex. Contacts the 5S and 23S rRNAs.

Functionally, this is one of the proteins that bind and probably mediate the attachment of the 5S RNA into the large ribosomal subunit, where it forms part of the central protuberance. This chain is Large ribosomal subunit protein uL18, found in Roseiflexus castenholzii (strain DSM 13941 / HLO8).